The chain runs to 331 residues: Proline-rich protein 33 (331 aa).

3 disordered regions span residues 1–112, 128–185, and 204–247; these read MGPQ…SVPR, SLES…PKVA, and APEP…APAS. The span at 94-105 shows a compositional bias: pro residues; the sequence is PEEPPVPRPPPG. A compositionally biased stretch (low complexity) spans 149 to 169; that stretch reads PPMAGPAAEAERVSSPAWASS. Residues 170 to 185 are compositionally biased toward pro residues; that stretch reads PTPPSGPHPCPVPKVA. Low complexity predominate over residues 217–238; it reads EPEVPTPTEQEVPAPTEQEVPA.

In Homo sapiens (Human), this protein is Proline-rich protein 33 (PRR33).